The chain runs to 743 residues: Catalase-peroxidase (743 aa).

Residues M1–R29 are disordered. Residues N8–A19 show a composition bias toward gly residues. A cross-link (tryptophyl-tyrosyl-methioninium (Trp-Tyr) (with M-248)) is located at residues W100–Y222. H101 serves as the catalytic Proton acceptor. Residues Y222–M248 constitute a cross-link (tryptophyl-tyrosyl-methioninium (Tyr-Met) (with W-100)). H263 lines the heme b pocket.

It belongs to the peroxidase family. Peroxidase/catalase subfamily. As to quaternary structure, homodimer or homotetramer. The cofactor is heme b. Post-translationally, formation of the three residue Trp-Tyr-Met cross-link is important for the catalase, but not the peroxidase activity of the enzyme.

It catalyses the reaction H2O2 + AH2 = A + 2 H2O. The catalysed reaction is 2 H2O2 = O2 + 2 H2O. Bifunctional enzyme with both catalase and broad-spectrum peroxidase activity. The sequence is that of Catalase-peroxidase from Stutzerimonas stutzeri (strain A1501) (Pseudomonas stutzeri).